The following is a 224-amino-acid chain: MQPREIAKFIDHTALTTEKTEQDILKLCDEAVAHHFRSVCINSGYIPLAKQKLTGTGVKICTVVGFPLGANLSSVKAFEAQEAIKAGAQEVDMVINVGLIKSGKWDEVRSDIEQVLHACRGTLLKVILETCLLTKAEIVHACEICRDLNVGFVKTSTGFNKSGATVADVALMRQTVGENIGVKASGGIRDTQTTLAMINAGATRIGASAGIAIIQGLQDNNGGY.

Asp-92 (proton donor/acceptor) is an active-site residue. Lys-154 serves as the catalytic Schiff-base intermediate with acetaldehyde. Lys-183 serves as the catalytic Proton donor/acceptor.

The protein belongs to the DeoC/FbaB aldolase family. DeoC type 1 subfamily.

It localises to the cytoplasm. It catalyses the reaction 2-deoxy-D-ribose 5-phosphate = D-glyceraldehyde 3-phosphate + acetaldehyde. Its pathway is carbohydrate degradation; 2-deoxy-D-ribose 1-phosphate degradation; D-glyceraldehyde 3-phosphate and acetaldehyde from 2-deoxy-alpha-D-ribose 1-phosphate: step 2/2. Catalyzes a reversible aldol reaction between acetaldehyde and D-glyceraldehyde 3-phosphate to generate 2-deoxy-D-ribose 5-phosphate. This chain is Deoxyribose-phosphate aldolase, found in Actinobacillus succinogenes (strain ATCC 55618 / DSM 22257 / CCUG 43843 / 130Z).